A 470-amino-acid chain; its full sequence is Uronate isomerase (470 aa).

It belongs to the metallo-dependent hydrolases superfamily. Uronate isomerase family.

The catalysed reaction is D-glucuronate = D-fructuronate. It carries out the reaction aldehydo-D-galacturonate = keto-D-tagaturonate. It functions in the pathway carbohydrate metabolism; pentose and glucuronate interconversion. The polypeptide is Uronate isomerase (Salmonella paratyphi A (strain ATCC 9150 / SARB42)).